We begin with the raw amino-acid sequence, 185 residues long: Ribosome-recycling factor (185 aa).

Belongs to the RRF family.

It localises to the cytoplasm. Functionally, responsible for the release of ribosomes from messenger RNA at the termination of protein biosynthesis. May increase the efficiency of translation by recycling ribosomes from one round of translation to another. This Pseudomonas fluorescens (strain ATCC BAA-477 / NRRL B-23932 / Pf-5) protein is Ribosome-recycling factor.